Here is a 210-residue protein sequence, read N- to C-terminus: Prolactin (210 aa).

The signal sequence occupies residues 1–23 (MTQGSRLYFAVAVLMCGFVSING). Disulfide bonds link C69–C183 and C200–C210.

Belongs to the somatotropin/prolactin family. In terms of tissue distribution, pituitary gland.

The protein localises to the secreted. In Carassius auratus (Goldfish), this protein is Prolactin (prl1).